The primary structure comprises 142 residues: Transcription antitermination protein NusB (142 aa).

The protein belongs to the NusB family.

Functionally, involved in transcription antitermination. Required for transcription of ribosomal RNA (rRNA) genes. Binds specifically to the boxA antiterminator sequence of the ribosomal RNA (rrn) operons. This is Transcription antitermination protein NusB from Buchnera aphidicola subsp. Cinara cedri (strain Cc).